A 34-amino-acid chain; its full sequence is MSDIN-like toxin proprotein 2 (34 aa).

Residues 1-10 (MSDINTARLP) constitute a propeptide that is removed on maturation. The segment at residues 11–20 (FYQFPDFKYP) is a cross-link (cyclopeptide (Phe-Pro)). Positions 21–34 (CVGDDIEMVLARGE) are excised as a propeptide.

This sequence belongs to the MSDIN fungal toxin family. Post-translationally, processed by the macrocyclase-peptidase enzyme POPB to yield a toxic cyclic decapeptide. POPB first removes 10 residues from the N-terminus. Conformational trapping of the remaining peptide forces the enzyme to release this intermediate rather than proceed to macrocyclization. The enzyme rebinds the remaining peptide in a different conformation and catalyzes macrocyclization of the N-terminal 10 residues.

Functionally, probable toxin that belongs to the MSDIN-like toxin family responsible for a large number of food poisoning cases and deaths. In Amanita bisporigera (Destroying angel), this protein is MSDIN-like toxin proprotein 2.